Consider the following 395-residue polypeptide: Pesticidal crystal protein Cry6Ba (395 aa).

This sequence belongs to the cry6A endotoxin family.

Its function is as follows. Endotoxin with nematicidal activity. This is Pesticidal crystal protein Cry6Ba (cry6Ba) from Bacillus thuringiensis.